A 72-amino-acid chain; its full sequence is UPF0270 protein YheU (72 aa).

It belongs to the UPF0270 family.

The sequence is that of UPF0270 protein YheU from Escherichia coli (strain ATCC 8739 / DSM 1576 / NBRC 3972 / NCIMB 8545 / WDCM 00012 / Crooks).